The following is a 380-amino-acid chain: MKNISLLGASGSIGTQTLDVLRSHPDQFRLVAFSVGKNIDYAVKVIQEFSPQIVSVQREEDVLKLQAVSGNTKIVYGNEGLLEVALHPDAEIVVNAVVGSVGLLPTLRAIEAKKTIGIANKETLVTAGHLVMEAARKHNVSLLPVDSEHSAIFQCLNGENEKRISRLIITASGGSFRDKTRDELHHVTVEDALRHPNWSMGSKITIDSATMMNKGLEVIEAHWLFGIPYEQIDVVLHKESIIHSMVEFEDRSVMAQLGSPDMRVPIQYALTYPDRLPLSDTKQLNLWEIGTLHFEKMNQERFRCLRFAYEAGKAGGSMPAVMNAANEVAVEAFLQKRIGFLTVEDLIEKAMNHHNVIARPSLEEILEIDAATRRFVMEQI.

Residues serine 10, glycine 11, serine 12, isoleucine 13, glycine 36, lysine 37, asparagine 38, and asparagine 120 each contribute to the NADPH site. Residue lysine 121 coordinates 1-deoxy-D-xylulose 5-phosphate. Glutamate 122 contributes to the NADPH binding site. A Mn(2+)-binding site is contributed by aspartate 146. Residues serine 147, glutamate 148, serine 172, and histidine 195 each contribute to the 1-deoxy-D-xylulose 5-phosphate site. Glutamate 148 contacts Mn(2+). Position 201 (glycine 201) interacts with NADPH. 1-deoxy-D-xylulose 5-phosphate contacts are provided by serine 208, asparagine 213, lysine 214, and glutamate 217. Glutamate 217 lines the Mn(2+) pocket.

Belongs to the DXR family. Mg(2+) serves as cofactor. Mn(2+) is required as a cofactor.

It carries out the reaction 2-C-methyl-D-erythritol 4-phosphate + NADP(+) = 1-deoxy-D-xylulose 5-phosphate + NADPH + H(+). It functions in the pathway isoprenoid biosynthesis; isopentenyl diphosphate biosynthesis via DXP pathway; isopentenyl diphosphate from 1-deoxy-D-xylulose 5-phosphate: step 1/6. Its function is as follows. Catalyzes the NADPH-dependent rearrangement and reduction of 1-deoxy-D-xylulose-5-phosphate (DXP) to 2-C-methyl-D-erythritol 4-phosphate (MEP). This Bacillus thuringiensis subsp. konkukian (strain 97-27) protein is 1-deoxy-D-xylulose 5-phosphate reductoisomerase 2.